A 127-amino-acid polypeptide reads, in one-letter code: Protein SPIRAL1-like 4 (127 aa).

Residues 1–127 are disordered; the sequence is MGKARGVNSG…FGSGPCGSDK (127 aa). Over residues 39 to 48 the composition is skewed to low complexity; that stretch reads TTTTTTTTTT. Ser-80 is subject to Phosphoserine. Over residues 80 to 94 the composition is skewed to polar residues; sequence SPNNYYRSDGQNCGN.

The protein belongs to the SPIRAL1 family. Ubiquitous.

In terms of biological role, acts redundantly with SPR1 in maintaining the cortical microtubules organization essential for anisotropic cell growth. The protein is Protein SPIRAL1-like 4 (SP1L4) of Arabidopsis thaliana (Mouse-ear cress).